We begin with the raw amino-acid sequence, 177 residues long: ATP synthase subunit delta (177 aa).

Belongs to the ATPase delta chain family. F-type ATPases have 2 components, F(1) - the catalytic core - and F(0) - the membrane proton channel. F(1) has five subunits: alpha(3), beta(3), gamma(1), delta(1), epsilon(1). F(0) has three main subunits: a(1), b(2) and c(10-14). The alpha and beta chains form an alternating ring which encloses part of the gamma chain. F(1) is attached to F(0) by a central stalk formed by the gamma and epsilon chains, while a peripheral stalk is formed by the delta and b chains.

The protein localises to the cell inner membrane. Its function is as follows. F(1)F(0) ATP synthase produces ATP from ADP in the presence of a proton or sodium gradient. F-type ATPases consist of two structural domains, F(1) containing the extramembraneous catalytic core and F(0) containing the membrane proton channel, linked together by a central stalk and a peripheral stalk. During catalysis, ATP synthesis in the catalytic domain of F(1) is coupled via a rotary mechanism of the central stalk subunits to proton translocation. Functionally, this protein is part of the stalk that links CF(0) to CF(1). It either transmits conformational changes from CF(0) to CF(1) or is implicated in proton conduction. This chain is ATP synthase subunit delta, found in Photorhabdus laumondii subsp. laumondii (strain DSM 15139 / CIP 105565 / TT01) (Photorhabdus luminescens subsp. laumondii).